The chain runs to 227 residues: Cytochrome c oxidase subunit 2 (227 aa).

The Mitochondrial intermembrane segment spans residues 1–14; it reads MPYPMQLGFQDATS. A helical membrane pass occupies residues 15 to 45; it reads PIMEELTYFHDHTLMIVFLISSLVLYIIILM. The Mitochondrial matrix portion of the chain corresponds to 46–59; sequence LTTKLTHTSTMDAQ. The chain crosses the membrane as a helical span at residues 60–87; sequence EVETIWTILPAVILVLIALPSLRILYMM. At 88-227 the chain is on the mitochondrial intermembrane side; the sequence is DEIYNPYLTI…YFEKWSSMMQ (140 aa). Cu cation is bound by residues His-161, Cys-196, Glu-198, Cys-200, His-204, and Met-207. Residue Glu-198 coordinates Mg(2+). Residue Tyr-218 is modified to Phosphotyrosine.

The protein belongs to the cytochrome c oxidase subunit 2 family. Component of the cytochrome c oxidase (complex IV, CIV), a multisubunit enzyme composed of 14 subunits. The complex is composed of a catalytic core of 3 subunits MT-CO1, MT-CO2 and MT-CO3, encoded in the mitochondrial DNA, and 11 supernumerary subunits COX4I, COX5A, COX5B, COX6A, COX6B, COX6C, COX7A, COX7B, COX7C, COX8 and NDUFA4, which are encoded in the nuclear genome. The complex exists as a monomer or a dimer and forms supercomplexes (SCs) in the inner mitochondrial membrane with NADH-ubiquinone oxidoreductase (complex I, CI) and ubiquinol-cytochrome c oxidoreductase (cytochrome b-c1 complex, complex III, CIII), resulting in different assemblies (supercomplex SCI(1)III(2)IV(1) and megacomplex MCI(2)III(2)IV(2)). Found in a complex with TMEM177, COA6, COX18, COX20, SCO1 and SCO2. Interacts with TMEM177 in a COX20-dependent manner. Interacts with COX20. Interacts with COX16. It depends on Cu cation as a cofactor.

It localises to the mitochondrion inner membrane. It carries out the reaction 4 Fe(II)-[cytochrome c] + O2 + 8 H(+)(in) = 4 Fe(III)-[cytochrome c] + 2 H2O + 4 H(+)(out). Its function is as follows. Component of the cytochrome c oxidase, the last enzyme in the mitochondrial electron transport chain which drives oxidative phosphorylation. The respiratory chain contains 3 multisubunit complexes succinate dehydrogenase (complex II, CII), ubiquinol-cytochrome c oxidoreductase (cytochrome b-c1 complex, complex III, CIII) and cytochrome c oxidase (complex IV, CIV), that cooperate to transfer electrons derived from NADH and succinate to molecular oxygen, creating an electrochemical gradient over the inner membrane that drives transmembrane transport and the ATP synthase. Cytochrome c oxidase is the component of the respiratory chain that catalyzes the reduction of oxygen to water. Electrons originating from reduced cytochrome c in the intermembrane space (IMS) are transferred via the dinuclear copper A center (CU(A)) of subunit 2 and heme A of subunit 1 to the active site in subunit 1, a binuclear center (BNC) formed by heme A3 and copper B (CU(B)). The BNC reduces molecular oxygen to 2 water molecules using 4 electrons from cytochrome c in the IMS and 4 protons from the mitochondrial matrix. The sequence is that of Cytochrome c oxidase subunit 2 (MT-CO2) from Osphranter robustus (Wallaroo).